Here is a 702-residue protein sequence, read N- to C-terminus: MPRKTPIERYRNIGISAHIDAGKTTTTERILFYTGVNHKLGEVHDGAATMDWMEQEQERGITITSAATTAFWKGMANNYPEHRINIIDTPGHVDFTIEVERSMRVLDGACMVYDAVGGVQPQSETVWRQANKYSVPRIAFVNKMDRVGADFFRVRTQIADRLKGNAVPIQIPVGAEDHFKGVVDLVKMRAIVWDDDSQGVRFEYTDIPPELVATAKEWHDKMVEAAAEASEELLERYLSGEPLSEEEIKTGLRKRTVAGEIVPMLCGSAFKNKGVQAMLDAVIDYLPSPVDVPAILGHTEDDKEAERHPSDDEPFSALAFKIMTDPFVGQLIFFRVYSGVVNSGDTVYNPVKGKRERLGRILQMHANVRNEIKEVRAGDIAAAVGLKEATTGDTLCDPDKVIILERMSFPEPVISQAVEPKTKADQEKMGIALNRLAQEDPSFRVATDEESGQTIISGMGELHLEILVDRMKREFGVEASVGKPQVAYRETIKGKARDVEGKFIKQSGGRGQYGHVVLDVEPMPQGGGYEFVDAIKGGVVPREFIPAVDKGIRETLETGVLAGYPVVDVKATLVFGSYHDVDSNENAFRMAGSMAFKEGMRRAKPVLLEPMMAVEVETPEEFTGNVMGDLSSRRGMVHGMEDIAGGGGKIVRAEVPLATMFGYSTSLRSLTQGRATFTMEFKHYAEAPANVAEAVINARKVG.

The region spanning 8-290 (ERYRNIGISA…AVIDYLPSPV (283 aa)) is the tr-type G domain. Residues 17 to 24 (AHIDAGKT), 88 to 92 (DTPGH), and 142 to 145 (NKMD) each bind GTP.

It belongs to the TRAFAC class translation factor GTPase superfamily. Classic translation factor GTPase family. EF-G/EF-2 subfamily.

It is found in the cytoplasm. Functionally, catalyzes the GTP-dependent ribosomal translocation step during translation elongation. During this step, the ribosome changes from the pre-translocational (PRE) to the post-translocational (POST) state as the newly formed A-site-bound peptidyl-tRNA and P-site-bound deacylated tRNA move to the P and E sites, respectively. Catalyzes the coordinated movement of the two tRNA molecules, the mRNA and conformational changes in the ribosome. In Cupriavidus metallidurans (strain ATCC 43123 / DSM 2839 / NBRC 102507 / CH34) (Ralstonia metallidurans), this protein is Elongation factor G 2.